Here is a 433-residue protein sequence, read N- to C-terminus: MSSDDRHLGSSCGSFIKTEPSSPSSGIDALSHHSPSGSSDASGGFGLALGTHANGLDSPPMFAGAGLGGTPCRKSYEDCASGIMEDSAIKCEYMLNAIPKRLCLVCGDIASGYHYGVASCEACKAFFKRTIQGNIEYSCPATNECEITKRRRKSCQACRFMKCLKVGMLKEGVRLDRVRGGRQKYKRRLDSESSPYLSLQISPPAKKPLTKIVSYLLVAEPDKLYAMPPPGMPEGDIKALTTLCDLADRELVVIIGWAKHIPGFSSLSLGDQMSLLQSAWMEILILGIVYRSLPYDDKLVYAEDYIMDEEHSRLAGLLELYRAILQLVRRYKKLKVEKEEFVTLKALALANSDSMYIEDLEAVQKLQDLLHEALQDYELSQRHEEPWRTGKLLLTLPLLRQTAAKAVQHFYSVKLQGKVPMHKLFLEMLEAKV.

The segment at 1–38 is disordered; the sequence is MSSDDRHLGSSCGSFIKTEPSSPSSGIDALSHHSPSGS. Low complexity predominate over residues 28–38; that stretch reads DALSHHSPSGS. The segment at 93–211 is interaction with NANOG; sequence YMLNAIPKRL…SPPAKKPLTK (119 aa). The nuclear receptor DNA-binding region spans 100–186; it reads KRLCLVCGDI…RVRGGRQKYK (87 aa). 2 consecutive NR C4-type zinc fingers follow at residues 103–123 and 139–163; these read CLVCGDIASGYHYGVASCEAC and CPATNECEITKRRRKSCQACRFMKC. The tract at residues 203-433 is essential for ESRRB transcriptional activity and interaction with NCOA3; sequence PPAKKPLTKI…LFLEMLEAKV (231 aa). One can recognise an NR LBD domain in the interval 208-432; it reads PLTKIVSYLL…KLFLEMLEAK (225 aa).

Belongs to the nuclear hormone receptor family. NR3 subfamily. As to quaternary structure, binds DNA as a monomer. Interacts with NR0B1; represses ESRRB activity at the GATA6 promoter. Interacts with NANOG; reciprocally modulates their transcriptional activities and activates POU5F1 expression. Interacts with NCOA3; mediates the interaction between ESRRB and RNA polymerase II complexes and allows NCOA3 corecruitment to ESRRB, KLF4, NANOG, and SOX2 enhancer regions to trigger ESRRB-dependent gene activation involved in self-renewal and pluripotency. Interacts with KDM1A; co-occupes the core set of ESRRB targets including ELF5 and EOMES. Interacts with the multiprotein complex Integrator, at least composed of INTS1, INTS2, INTS3, INTS4, INTS5, INTS6, INTS7, INTS8, INTS9/RC74, INTS10, INTS11/CPSF3L and INTS12; ESRRB is probably not a core component of the integrator complex and associates to integrator via its interaction with INTS1 and INTS9; attracts the transcriptional machinery. Interacts with JARID2. Interacts with POU5F1; recruits ESRRB near the POU5F1-SOX2 element in the NANOG proximal promoter leading to activation of NANOG expression; the interaction is DNA independent. Interacts with NFE2L2; represses NFE2L2 transcriptional activity. Isoform 1 interacts with ESR1. Acetylated by PCAF/KAT2 (in vitro).

The protein resides in the nucleus. It is found in the cytoplasm. It localises to the chromosome. Transcription factor that binds a canonical ESRRB recognition (ERRE) sequence 5'TCAAGGTCA-3' localized on promoter and enhancer of targets genes regulating their expression or their transcription activity. Plays a role, in a LIF-independent manner, in maintainance of self-renewal and pluripotency of embryonic and trophoblast stem cells through different signaling pathways including FGF signaling pathway and Wnt signaling pathways. Involved in morula development (2-16 cells embryos) by acting as a regulator at the 8-cell stage. Upon FGF signaling pathway activation, interacts with KDM1A by directly binding to enhancer site of ELF5 and EOMES and activating their transcription leading to self-renewal of trophoblast stem cells. Also regulates expression of multiple rod-specific genes and is required for survival of this cell type. Plays a role as transcription factor activator of GATA6, NR0B1, POU5F1 and PERM1. Plays a role as transcription factor repressor of NFE2L2 transcriptional activity and ESR1 transcriptional activity. During mitosis remains bound to a subset of interphase target genes, including pluripotency regulators, through the canonical ESRRB recognition (ERRE) sequence, leading to their transcriptional activation in early G1 phase. Can coassemble on structured DNA elements with other transcription factors like SOX2, POU5F1, KDM1A and NCOA3 to trigger ESRRB-dependent gene activation. This mechanism, in the case of SOX2 corecruitment prevents the embryonic stem cells (ESCs) to epiblast stem cells (EpiSC) transition through positive regulation of NR0B1 that inhibits the EpiSC transcriptional program. Also plays a role inner ear development by controlling expression of ion channels and transporters and in early placentation. Its function is as follows. Transcription factor that binds a canonical ESRRB recognition (ERRE) sequence 5'TCAAGGTCA-3' localized on promoter and enhancer of targets genes regulating their expression or their transcription activity. Positively regulates ESR1 transcriptional activity upon E2 stimulation. The chain is Steroid hormone receptor ERR2 from Homo sapiens (Human).